Here is a 364-residue protein sequence, read N- to C-terminus: Deoxyribonuclease-2-alpha (364 aa).

The N-terminal stretch at 1-21 (MATLSPLLLAALLWVPVGTLT) is a signal peptide. Residues cysteine 22 and cysteine 161 are joined by a disulfide bond. Asparagine 72, asparagine 88, asparagine 171, asparagine 214, asparagine 268, and asparagine 292 each carry an N-linked (GlcNAc...) asparagine glycan. Disulfide bonds link cysteine 269-cysteine 349 and cysteine 310-cysteine 329. Residue histidine 297 is part of the active site.

It belongs to the DNase II family.

The protein localises to the lysosome. It catalyses the reaction Endonucleolytic cleavage to nucleoside 3'-phosphates and 3'-phosphooligonucleotide end-products.. In terms of biological role, hydrolyzes DNA under acidic conditions with a preference for double-stranded DNA. Plays a major role in the clearance of nucleic acids generated through apoptosis, hence preventing autoinflammation. Necessary for proper fetal development and for definitive erythropoiesis in fetal liver and bone marrow, where it degrades nuclear DNA expelled from erythroid precursor cells. The sequence is that of Deoxyribonuclease-2-alpha (DNASE2) from Sus scrofa (Pig).